A 319-amino-acid polypeptide reads, in one-letter code: ADP-L-glycero-D-manno-heptose-6-epimerase (319 aa).

NADP(+) is bound by residues 10-11, 31-32, Lys-38, Lys-53, and 75-79; these read FI, DD, and EGACS. The Proton acceptor role is filled by Tyr-139. Residue Lys-143 coordinates NADP(+). Residue Asn-168 participates in substrate binding. NADP(+) contacts are provided by Val-169 and Lys-177. The Proton acceptor role is filled by Lys-177. Substrate is bound by residues Ser-179, His-186, 200 to 203, Arg-213, and Tyr-281; that span reads FEGA.

This sequence belongs to the NAD(P)-dependent epimerase/dehydratase family. HldD subfamily. Homopentamer. It depends on NADP(+) as a cofactor.

It carries out the reaction ADP-D-glycero-beta-D-manno-heptose = ADP-L-glycero-beta-D-manno-heptose. It functions in the pathway nucleotide-sugar biosynthesis; ADP-L-glycero-beta-D-manno-heptose biosynthesis; ADP-L-glycero-beta-D-manno-heptose from D-glycero-beta-D-manno-heptose 7-phosphate: step 4/4. Functionally, catalyzes the interconversion between ADP-D-glycero-beta-D-manno-heptose and ADP-L-glycero-beta-D-manno-heptose via an epimerization at carbon 6 of the heptose. This Aromatoleum aromaticum (strain DSM 19018 / LMG 30748 / EbN1) (Azoarcus sp. (strain EbN1)) protein is ADP-L-glycero-D-manno-heptose-6-epimerase.